A 314-amino-acid polypeptide reads, in one-letter code: Coiled-coil domain-containing protein 42 like-2 (314 aa).

Coiled coils occupy residues 34 to 133 and 175 to 231; these read RLLE…KGTL and NKLL…FQWE.

It belongs to the CFAP73 family.

This chain is Coiled-coil domain-containing protein 42 like-2, found in Xenopus tropicalis (Western clawed frog).